We begin with the raw amino-acid sequence, 344 residues long: Heat-inducible transcription repressor HrcA (344 aa).

This sequence belongs to the HrcA family.

Negative regulator of class I heat shock genes (grpE-dnaK-dnaJ and groELS operons). Prevents heat-shock induction of these operons. This Streptococcus mutans serotype c (strain ATCC 700610 / UA159) protein is Heat-inducible transcription repressor HrcA.